The following is a 110-amino-acid chain: uncharacterized protein (110 aa).

The N-terminal stretch at 1–23 (MKRITINIITMFIAAAVISLTGT) is a signal peptide.

This is an uncharacterized protein from Bacillus subtilis (strain 168).